The chain runs to 432 residues: Transcriptional adapter 3-B (432 aa).

2 disordered regions span residues 90 to 124 (HELG…PKSR) and 275 to 315 (SPVE…KSLE). The segment covering 293-305 (DGASTSPRSQNKP) has biased composition (polar residues). Positions 335-398 (ADDSEDEVLA…NEVMDAFRKI (64 aa)) form a coiled coil.

It belongs to the NGG1 family.

The protein resides in the nucleus. Functionally, functions as a component of the PCAF complex. The PCAF complex is capable of efficiently acetylating histones in a nucleosomal context. This is Transcriptional adapter 3-B (tada3-b) from Xenopus laevis (African clawed frog).